Here is a 142-residue protein sequence, read N- to C-terminus: Large ribosomal subunit protein uL13 (142 aa).

The protein belongs to the universal ribosomal protein uL13 family. Part of the 50S ribosomal subunit.

This protein is one of the early assembly proteins of the 50S ribosomal subunit, although it is not seen to bind rRNA by itself. It is important during the early stages of 50S assembly. The sequence is that of Large ribosomal subunit protein uL13 from Pyrococcus furiosus (strain ATCC 43587 / DSM 3638 / JCM 8422 / Vc1).